We begin with the raw amino-acid sequence, 971 residues long: uncharacterized protein (971 aa).

Residues 1–24 (MQSNLLKVLGVLAIVATLVCFIFA) form the signal peptide. The tract at residues 127–146 (RTRPGKSNLDDSGQMIPIPR) is disordered. A run of 6 helical transmembrane segments spans residues 611–631 (IKAILILYVMTYGAMFLLGFA), 721–741 (LGLSGIIYFIITFIAICIVII), 753–773 (AFMATCILIGIAPLFISFLLF), 795–815 (VVMMAGIIVLTQLFTIYLDFV), 832–852 (FIGTILPIALLNVPIFCINWF), and 865–885 (GVNMQNIVALVIIAYGMYGYV). Residues 933-971 (TGRAKSRLEQRNRTLEHAEQNSKKYKKRIGENTNEETLK) form a disordered region. Over residues 938–954 (SRLEQRNRTLEHAEQNS) the composition is skewed to basic and acidic residues.

The protein belongs to the TrbL/VirB6 family.

Its subcellular location is the cell membrane. This is an uncharacterized protein from Rickettsia prowazekii (strain Madrid E).